The primary structure comprises 466 residues: Flagellum-specific ATP synthase (466 aa).

Residue 194 to 201 participates in ATP binding; the sequence is SSSGLGKS.

It belongs to the ATPase alpha/beta chains family.

The protein resides in the cytoplasm. It carries out the reaction ATP + H2O + 4 H(+)(in) = ADP + phosphate + 5 H(+)(out). Functionally, probable catalytic subunit of a protein translocase for flagellum-specific export, or a proton translocase involved in local circuits at the flagellum. May be involved in a specialized protein export pathway that proceeds without signal peptide cleavage. The sequence is that of Flagellum-specific ATP synthase (fliI) from Buchnera aphidicola subsp. Schizaphis graminum (strain Sg).